Here is a 528-residue protein sequence, read N- to C-terminus: MASPDLFPNVSFSHVSVPAAAGASTEVTGGATAVFGGDASTGAPRLSLVWSGETQAKHTLEIDLSDAQIFKLGPTEWLCVSGESEAKDGVEEKSYSRAIKVVLRTEAESKAFYLAFQQWKHRVISGKAGEPLENGLIIGSKSKFDTKIEASSAKMYFHYYGQLLHQQNMLQDFVRTGTYYAAVMENRSDFEGRVVVDVGAGSGILSLFAAQAGARHVYAVEASEMAEHAQRLISGNPSLGQRITVIKGKVEEVELPEKADILISEPMGTLLVNERMLESYVIARDRFLVPGGKMFPTTGRIHMAPFSDEYLYVEMANKALFWQQHNFFGVDLTPLHGSAFQGYFSQPVVDAFDPRLLVSPPTFHTLDFTTMKEEELYEIDIPLNFVASVGTRVHGLACWFDVLFNGSTVQRWLTTAPGSPTTHWYQLRCILSQPLYVMAGQEITGRLHLVAHSAQSYTIYLTMSAKMWGEGAEQGGILQTSTAKLELKEPYYRLSQPQPYVMQQDQQQQQLPSLQPQSPLWDYHYGQD.

Residues 149–464 form the SAM-dependent MTase PRMT-type domain; the sequence is EASSAKMYFH…QSYTIYLTMS (316 aa). S-adenosyl-L-methionine is bound by residues Q166, R175, G199, E221, E251, and S279. Over residues 500 to 520 the composition is skewed to low complexity; sequence YVMQQDQQQQQLPSLQPQSPL. A disordered region spans residues 500–528; that stretch reads YVMQQDQQQQQLPSLQPQSPLWDYHYGQD.

This sequence belongs to the class I-like SAM-binding methyltransferase superfamily. Protein arginine N-methyltransferase family.

Its subcellular location is the nucleus. It is found in the cytoplasm. The enzyme catalyses L-arginyl-[protein] + 2 S-adenosyl-L-methionine = N(omega),N(omega)-dimethyl-L-arginyl-[protein] + 2 S-adenosyl-L-homocysteine + 2 H(+). Methylates (mono- and asymmetric dimethylation) the guanidino nitrogens of arginyl residues in several proteins involved in DNA packaging, transcription regulation, and mRNA stability. Recruited to promoters upon gene activation, methylates histone H3 and activates transcription via chromatin remodeling. This is Probable histone-arginine methyltransferase CARM1 (CARM1) from Oryza sativa subsp. indica (Rice).